Consider the following 312-residue polypeptide: Glycine--tRNA ligase alpha subunit (312 aa).

This sequence belongs to the class-II aminoacyl-tRNA synthetase family. As to quaternary structure, tetramer of two alpha and two beta subunits.

The protein localises to the cytoplasm. It catalyses the reaction tRNA(Gly) + glycine + ATP = glycyl-tRNA(Gly) + AMP + diphosphate. The sequence is that of Glycine--tRNA ligase alpha subunit from Methylobacillus flagellatus (strain ATCC 51484 / DSM 6875 / VKM B-1610 / KT).